Here is a 230-residue protein sequence, read N- to C-terminus: Ureidoacrylate amidohydrolase RutB (230 aa).

D24 acts as the Proton acceptor in catalysis. K133 is a catalytic residue. C166 (nucleophile) is an active-site residue.

Belongs to the isochorismatase family. RutB subfamily.

The enzyme catalyses (Z)-3-ureidoacrylate + H2O + H(+) = (Z)-3-aminoacrylate + NH4(+) + CO2. It catalyses the reaction (Z)-3-ureidoacrylate + H2O = (Z)-3-aminoacrylate + carbamate + H(+). The catalysed reaction is (Z)-2-methylureidoacrylate + H2O + H(+) = (Z)-2-methylaminoacrylate + NH4(+) + CO2. Functionally, hydrolyzes ureidoacrylate to form aminoacrylate and carbamate. The carbamate hydrolyzes spontaneously, thereby releasing one of the nitrogen atoms of the pyrimidine ring as ammonia and one of its carbon atoms as CO2. The sequence is that of Ureidoacrylate amidohydrolase RutB from Escherichia coli O6:K15:H31 (strain 536 / UPEC).